A 65-amino-acid polypeptide reads, in one-letter code: Small ribosomal subunit protein uS10 (65 aa).

This sequence belongs to the universal ribosomal protein uS10 family. Part of the 30S ribosomal subunit.

Involved in the binding of tRNA to the ribosomes. This is Small ribosomal subunit protein uS10 (rps10) from Desulfurococcus mucosus (Desulfurococcus mobilis).